We begin with the raw amino-acid sequence, 99 residues long: Beta-2-microglobulin (99 aa).

Residues 5-92 enclose the Ig-like C1-type domain; the sequence is PNVQVYSRHP…KHVTLKEPMT (88 aa). A disulfide bridge connects residues Cys25 and Cys80.

The protein belongs to the beta-2-microglobulin family. In terms of assembly, heterodimer of an alpha chain and a beta chain. Beta-2-microglobulin is the beta-chain of major histocompatibility complex class I molecules.

Its subcellular location is the secreted. Component of the class I major histocompatibility complex (MHC). Involved in the presentation of peptide antigens to the immune system. The chain is Beta-2-microglobulin (B2M) from Oryctolagus cuniculus (Rabbit).